The primary structure comprises 338 residues: Heat-inducible transcription repressor HrcA (338 aa).

This sequence belongs to the HrcA family.

Negative regulator of class I heat shock genes (grpE-dnaK-dnaJ and groELS operons). Prevents heat-shock induction of these operons. The chain is Heat-inducible transcription repressor HrcA from Bacillus anthracis (strain A0248).